Reading from the N-terminus, the 2098-residue chain is MTLPNNVILFGDQTVDPCPIIKQLYRQSRDFLTLEALFRQSYDAVRREIATLEYSDRALFPAFNSIQGLAERQAERHNEAVSTVLHCIAQLGLLLIYADQDDSLFNASPSRTYLVGLCTGMLPAAALAASSSTSQLLRLAPDVVLVALRLGLEANRRSAQIEASTESWASVVPGMAPQEQQAALAQFNDEFMIPTSKQAYISAESDSTATISGPPSTLVSLFSSSDSFRKARRIKLPITAAFHAPHLRLPDVEKIIGSLSHSDEYPLRNDVVIVSTRSGKPITAQSLGDALQHIILDILQEPMRWSSVVDEMINNLKDQRTILTSAGPVRAADSLRQRLASAGIEVLKSTEMQPQGEQPTKPRSSDIAIIGFAARLPESETLEEAWKLLEDGRDIPSDRFDVNTHCDPSGKIKNTSHTPYGCFLDRPGFFDARLFNMSPREASQTDPAQRLLLLTTYEALEMAGYTPDGTPSTAGDRIGTFFGQTLDDYREANASQNIEMYYVSGGIRAFGPGRLNFHFKWEGPSYCVDAACSSSTLSIQMAMSSLRAHECDTAVAGGTNVLTGVDMFSGLSRGSFLSPTGSCKTFDNDADGYCRGDGVGSVILKRLDDAIADGDNIQAVIKSAATNHSAHAVSITHPHAGAQQNLMRQVLRDADVEPSDIDYVEMHGTGTQAGDATEFASVTNVISGRTRDNPLHVGAVKANIGHAEAAAGTNSLVKVLMMMRKNAIPPHVGIKGRINESFPPLDKINVRINRTMTPFVARAGGDGKRRVLLNNFNATGGNTSLLLEDAPKTEIRGHDPRSAHVIAISAKTSYSFRQNTQRLLEYLQQNPETQLQDLAYTTTARRMHHAIRKAYAVQSTEQLVQSLKKDISNSPEIGATTEHTSAIFLFTGQGSQYLGMGRQLFQTNTSFRKSISDSDSICTRQGLPSFEWIVSAEPSDDRVPTPSETQLALVAIALALAALWQSWGITPKAVIGHSLGEYAALCVAGVLSVSDTLYLVGKRAEMMEKKCVANTHAMLAIQSDSESIQQLISGGQMPSCEIACFNGPSNTVVSGSLKDIHSLEVKLSAMGTKTTLLKLPFAFHSVQMDPILEDIRALAQNVQFRKPIVPIASTLLGTLVKDHGIITADYLARQARQAVKFQEALQACKAENIASEDTLWIEVGPHPLCHGMVRSTLGLSPTKALPTLKRDEDCWSTISRSIANAYNSGVKVSWIDYHRDFQGALKLLELPSYAFDLKNYWIQHEGDWSLRKGETTRTTAPPPQASFSTTCLQGVENETFTQDSASVTFSSQLSEPKLNAAVRGHLVSGIGLCPSSVYADVAFTAAWYIASRMTPSDPVPAMDLSTMEVFRPLVVNSNETSQLLKVSASRNSNEQVVNIKISSQDSKGRQEHAHCTVMYGDGQQWMDEWQRNAYLFESRIAKLTQPSSPGIHRMLKEMIYKQFQTVVTYSPEYHNIDEIFMDCDLNETAANIKLQSMAGSGEFIYSPYWIDTIAHLAGFILNANVKTPTDTVFISHGWQSFRIAAPLSAEKAYRGYVRMQPSNGRGVMAGDVYIFDGEDIVVVCKGIKFQQMKRTTLQSLLGVSTAATSISKPVAAKETRPHPVVVRKAAVTQSPSAGFSKVLDTIASEVGVDVSELSDDVKISDVGVDSLLTISILGRLRPETGLDLSSSLFIEHPTIAELRAFFLDKMDEPQATANDDDSDDSSEDEDPGYSRSQSNSTISTPEEPDVVSILMSIVAREVGVEESEIQLSTPFAEIGVDSLLTISILDAFKTEIGVNLSANFFHDHPTFADVQKALGPTSTPQKSLDLPLRSLEQSSKASSQTLRAKSVLLQGRPEKGKPALFLLPDGAGSLFSYISMPSLPSGLPVYGLDSPFHNDPSEYTISFSAVAAIYIAAIRAIQPKGPYMLGGWSLGGIHAYETARQLIEQGETISNLIMIDSPCPGTLPPLPAPTLSLLEKAGIFDGLSTSGAPITERTRLHFLGCVRALENYTAVPLPVGKSPGKVTVIWAQEGVLEGREEQGKEYMAATSSGDLNKDMDKAKEWLTGRRTSFGPSGWDKLTGTEVHCHVVSGNHFSIMFPPKIAAVAKAVATGLPEK.

In terms of domain architecture, Starter acyltransferase (SAT) spans 8–243; the sequence is ILFGDQTVDP…IKLPITAAFH (236 aa). The 426-residue stretch at 364–789 folds into the Ketosynthase family 3 (KS3) domain; the sequence is SSDIAIIGFA…GGNTSLLLED (426 aa). Active-site for beta-ketoacyl synthase activity residues include C532, H667, and H706. One can recognise a Malonyl-CoA:ACP transacylase (MAT) domain in the interval 887–1211; that stretch reads IFLFTGQGSQ…IANAYNSGVK (325 aa). The N-terminal hotdog fold stretch occupies residues 1270-1404; sequence TCLQGVENET…CTVMYGDGQQ (135 aa). One can recognise a PKS/mFAS DH domain in the interval 1270 to 1578; it reads TCLQGVENET…FQQMKRTTLQ (309 aa). The active-site Proton acceptor; for dehydratase activity is H1305. Residues 1431–1578 are C-terminal hotdog fold; the sequence is IHRMLKEMIY…FQQMKRTTLQ (148 aa). The Proton donor; for dehydratase activity role is filled by D1491. A Carrier 1 domain is found at 1613 to 1690; that stretch reads QSPSAGFSKV…ELRAFFLDKM (78 aa). S1650 bears the O-(pantetheine 4'-phosphoryl)serine mark. The disordered stretch occupies residues 1693–1725; sequence PQATANDDDSDDSSEDEDPGYSRSQSNSTISTP. Positions 1698 to 1711 are enriched in acidic residues; that stretch reads NDDDSDDSSEDEDP. The span at 1714-1724 shows a compositional bias: polar residues; it reads SRSQSNSTIST. Positions 1725-1802 constitute a Carrier 2 domain; sequence PEEPDVVSIL…DVQKALGPTS (78 aa). Residue S1762 is modified to O-(pantetheine 4'-phosphoryl)serine. The interval 1844–2080 is thioesterase (TE) domain; the sequence is LFLLPDGAGS…VSGNHFSIMF (237 aa).

The cofactor is pantetheine 4'-phosphate.

It participates in secondary metabolite biosynthesis. Non-reducing polyketide synthase; part of the gene cluster that mediates the biosynthesis of the red pigment cristazarin, a naphthazarin derivative. The polyketide product of crz7 is likely 2-acetyl-1,3,6,8-tetrahydoxynaphthalene (AT4HN) from which a probable biosynthetic route of cristazarin can be deduced. The presence of two O-methyltransferases (crz1 and crz2), an enoyl reductase (crz5), an oxidase (crz8), and a short-chain dehydrogenase (crz9) encoded in the cristazarin biosynthetic cluster is consistent with methylation of a hydroxyl group, addition of two hydroxyl groups to the naphthalene core ring, and reduction of the acetyl side chain. This Cladonia metacorallifera (Lichen-forming fungus) protein is Non-reducing polyketide synthase crz7.